Here is a 416-residue protein sequence, read N- to C-terminus: Glutamyl-tRNA reductase 1 (416 aa).

Substrate-binding positions include 57–60 (TCNR), serine 113, 118–120 (DFE), and glutamine 124. Catalysis depends on cysteine 58, which acts as the Nucleophile. Residue 193-198 (GTGKIG) participates in NADP(+) binding.

The protein belongs to the glutamyl-tRNA reductase family. As to quaternary structure, homodimer.

The enzyme catalyses (S)-4-amino-5-oxopentanoate + tRNA(Glu) + NADP(+) = L-glutamyl-tRNA(Glu) + NADPH + H(+). Its pathway is porphyrin-containing compound metabolism; protoporphyrin-IX biosynthesis; 5-aminolevulinate from L-glutamyl-tRNA(Glu): step 1/2. Its function is as follows. Catalyzes the NADPH-dependent reduction of glutamyl-tRNA(Glu) to glutamate 1-semialdehyde (GSA). This Flavobacterium johnsoniae (strain ATCC 17061 / DSM 2064 / JCM 8514 / BCRC 14874 / CCUG 350202 / NBRC 14942 / NCIMB 11054 / UW101) (Cytophaga johnsonae) protein is Glutamyl-tRNA reductase 1.